The sequence spans 246 residues: AA9 family lytic polysaccharide monooxygenase D (246 aa).

An N-terminal signal peptide occupies residues 1-19; it reads MHLLSLLFPVIALIPTVLS. A Cu(2+)-binding site is contributed by His-20. The cysteines at positions 78 and 196 are disulfide-linked. Residues Asn-86, Asn-141, and Asn-156 are each glycosylated (N-linked (GlcNAc...) asparagine). Residues His-182 and Gln-191 each contribute to the O2 site. Tyr-193 serves as a coordination point for Cu(2+). A glycan (N-linked (GlcNAc...) asparagine) is linked at Asn-235.

It belongs to the polysaccharide monooxygenase AA9 family. Cu(2+) serves as cofactor.

Its subcellular location is the secreted. It catalyses the reaction [(1-&gt;4)-beta-D-glucosyl]n+m + reduced acceptor + O2 = 4-dehydro-beta-D-glucosyl-[(1-&gt;4)-beta-D-glucosyl]n-1 + [(1-&gt;4)-beta-D-glucosyl]m + acceptor + H2O.. In terms of biological role, lytic polysaccharide monooxygenase (LPMO) that depolymerizes crystalline and amorphous polysaccharides via the oxidation of scissile alpha- or beta-(1-4)-glycosidic bonds, yielding C1 and C4 oxidation products. Catalysis by LPMOs requires the reduction of the active-site copper from Cu(II) to Cu(I) by a reducing agent and H(2)O(2) or O(2) as a cosubstrate. This Botryotinia fuckeliana (strain B05.10) (Noble rot fungus) protein is AA9 family lytic polysaccharide monooxygenase D.